Consider the following 325-residue polypeptide: tRNA dimethylallyltransferase (325 aa).

11–18 (GPTASGKS) serves as a coordination point for ATP. Substrate is bound at residue 13–18 (TASGKS). Interaction with substrate tRNA stretches follow at residues 36–39 (DSMQ) and 160–164 (QRLIR).

It belongs to the IPP transferase family. In terms of assembly, monomer. Mg(2+) is required as a cofactor.

It carries out the reaction adenosine(37) in tRNA + dimethylallyl diphosphate = N(6)-dimethylallyladenosine(37) in tRNA + diphosphate. In terms of biological role, catalyzes the transfer of a dimethylallyl group onto the adenine at position 37 in tRNAs that read codons beginning with uridine, leading to the formation of N6-(dimethylallyl)adenosine (i(6)A). The polypeptide is tRNA dimethylallyltransferase (Rickettsia canadensis (strain McKiel)).